A 134-amino-acid polypeptide reads, in one-letter code: Protein PsiB (134 aa).

Could be involved directly or indirectly in exopolysaccharide synthesis. The sequence is that of Protein PsiB (psiB) from Rhizobium leguminosarum bv. phaseoli.